The sequence spans 645 residues: Protein FAM47B (645 aa).

Composition is skewed to basic and acidic residues over residues 1 to 11, 238 to 251, and 288 to 299; these read MGDRRPQDRPR, EPPETRASHLRVDP, and PETRVSHLHPEP. Disordered regions lie at residues 1-23 and 168-321; these read MGDRRPQDRPRSQGMDSKPWYCD and AREK…SLCP.

Belongs to the FAM47 family.

This chain is Protein FAM47B (FAM47B), found in Homo sapiens (Human).